A 252-amino-acid chain; its full sequence is Flagellar L-ring protein (252 aa).

The N-terminal stretch at 1–25 (MSKSVPLQRIVLVAALMATGGLAGG) is a signal peptide. A lipid anchor (N-palmitoyl cysteine) is attached at Cys26. Cys26 carries S-diacylglycerol cysteine lipidation.

This sequence belongs to the FlgH family. The basal body constitutes a major portion of the flagellar organelle and consists of four rings (L,P,S, and M) mounted on a central rod.

Its subcellular location is the cell outer membrane. The protein localises to the bacterial flagellum basal body. Assembles around the rod to form the L-ring and probably protects the motor/basal body from shearing forces during rotation. In Rhodopseudomonas palustris (strain ATCC BAA-98 / CGA009), this protein is Flagellar L-ring protein.